The chain runs to 933 residues: Phospholipase SGR2 (933 aa).

Residues 1 to 14 (MEDRETHLGTREVN) show a composition bias toward basic and acidic residues. The segment at 1 to 22 (MEDRETHLGTREVNETSPDLLK) is disordered. Residue Ser444 is part of the active site. Disordered stretches follow at residues 475 to 517 (PDEE…GQDN) and 553 to 598 (RGGQ…ESVN). A compositionally biased stretch (polar residues) spans 505-517 (QLNNPEKITGQDN). Basic and acidic residues predominate over residues 553–563 (RGGQEDDHHDS). Positions 593–631 (DKESVNSNNEERIKLLQDEVNSLRSKVAQLLSENARILS) form a coiled coil. The region spanning 669–868 (LEFKVDTFFA…ALFIIKHLYR (200 aa)) is the DDHD domain. The disordered stretch occupies residues 871–903 (PDGPNSPTESTEGDDSPKDSSRPHSWIDRREAD). Basic and acidic residues predominate over residues 885–902 (DSPKDSSRPHSWIDRREA).

Forms oligomers. As to expression, expressed in roots, hypocotyls, leaves, stems and floral buds, and, at low levels, in siliques.

The protein resides in the vacuole membrane. In terms of biological role, involved in vacuolar formation or function (e.g. formation of vacuolar membrane 'bulbs'). Required for amyloplast sedimentation in the endodermis during shoot gravitropism, which are thus acting as statoliths. Particularly important for the negative gravitropism leading to leaf movement observed in darkness. The chain is Phospholipase SGR2 (SGR2) from Arabidopsis thaliana (Mouse-ear cress).